The chain runs to 420 residues: UDP-N-acetylglucosamine 1-carboxyvinyltransferase (420 aa).

Phosphoenolpyruvate is bound at residue 22–23 (KN). Residue Arg-91 participates in UDP-N-acetyl-alpha-D-glucosamine binding. Residue Cys-115 is the Proton donor of the active site. Cys-115 carries the 2-(S-cysteinyl)pyruvic acid O-phosphothioketal modification. UDP-N-acetyl-alpha-D-glucosamine is bound by residues 120 to 124 (RPVDL), 160 to 163 (KVSV), Asp-305, and Ile-327.

This sequence belongs to the EPSP synthase family. MurA subfamily.

It localises to the cytoplasm. It carries out the reaction phosphoenolpyruvate + UDP-N-acetyl-alpha-D-glucosamine = UDP-N-acetyl-3-O-(1-carboxyvinyl)-alpha-D-glucosamine + phosphate. Its pathway is cell wall biogenesis; peptidoglycan biosynthesis. Functionally, cell wall formation. Adds enolpyruvyl to UDP-N-acetylglucosamine. The polypeptide is UDP-N-acetylglucosamine 1-carboxyvinyltransferase (Erwinia tasmaniensis (strain DSM 17950 / CFBP 7177 / CIP 109463 / NCPPB 4357 / Et1/99)).